The following is a 228-amino-acid chain: Ribonuclease 3 1 (228 aa).

An RNase III domain is found at 1–124; it reads MYKLLMFRDD…VIGAYYLDNN (124 aa). Mg(2+) is bound at residue Glu37. The active site involves Asp41. 2 residues coordinate Mg(2+): Ser110 and Glu113. Glu113 is an active-site residue. In terms of domain architecture, DRBM spans 153 to 223; it reads DSKNRFQEWV…AENALANLNK (71 aa).

The protein belongs to the ribonuclease III family. As to quaternary structure, homodimer. Requires Mg(2+) as cofactor.

The protein localises to the cytoplasm. The catalysed reaction is Endonucleolytic cleavage to 5'-phosphomonoester.. Its function is as follows. Digests double-stranded RNA. Involved in the processing of primary rRNA transcript to yield the immediate precursors to the large and small rRNAs (23S and 16S). Processes some mRNAs, and tRNAs when they are encoded in the rRNA operon. Processes pre-crRNA and tracrRNA of type II CRISPR loci if present in the organism. The chain is Ribonuclease 3 1 from Nostoc sp. (strain PCC 7120 / SAG 25.82 / UTEX 2576).